The sequence spans 336 residues: Fructose-1,6-bisphosphatase class 1 (336 aa).

Mg(2+) contacts are provided by E90, D112, L114, and D115. Residues 115-118 (DGSS), N211, and K277 each bind substrate. E283 provides a ligand contact to Mg(2+).

Belongs to the FBPase class 1 family. In terms of assembly, homotetramer. Requires Mg(2+) as cofactor.

The protein localises to the cytoplasm. The enzyme catalyses beta-D-fructose 1,6-bisphosphate + H2O = beta-D-fructose 6-phosphate + phosphate. Its pathway is carbohydrate biosynthesis; gluconeogenesis. In Pseudomonas aeruginosa (strain UCBPP-PA14), this protein is Fructose-1,6-bisphosphatase class 1.